The sequence spans 279 residues: NAD kinase (279 aa).

The Proton acceptor role is filled by aspartate 57. NAD(+) contacts are provided by residues 57 to 58 (DG), 133 to 134 (NE), arginine 159, aspartate 161, and 172 to 177 (TAYNKS).

It belongs to the NAD kinase family. It depends on a divalent metal cation as a cofactor.

The protein resides in the cytoplasm. It catalyses the reaction NAD(+) + ATP = ADP + NADP(+) + H(+). Its function is as follows. Involved in the regulation of the intracellular balance of NAD and NADP, and is a key enzyme in the biosynthesis of NADP. Catalyzes specifically the phosphorylation on 2'-hydroxyl of the adenosine moiety of NAD to yield NADP. This Streptococcus pyogenes serotype M28 (strain MGAS6180) protein is NAD kinase.